A 146-amino-acid chain; its full sequence is Acetyl-CoA decarbonylase/synthase complex subunit epsilon (146 aa).

The protein belongs to the CdhB family. Heterotetramer of two alpha and two epsilon subunits. The ACDS complex is made up of alpha, epsilon, beta, gamma and delta subunits with a probable stoichiometry of (alpha(2)epsilon(2))(4)-beta(8)-(gamma(1)delta(1))(8).

In terms of biological role, part of a complex that catalyzes the reversible cleavage of acetyl-CoA, allowing autotrophic growth from CO(2). The alpha-epsilon subcomponent functions as a carbon monoxide dehydrogenase. The precise role of the epsilon subunit is unclear; it may have a stabilizing role within the alpha(2)epsilon(2) component and/or be involved in electron transfer to FAD during a potential FAD-mediated CO oxidation. The protein is Acetyl-CoA decarbonylase/synthase complex subunit epsilon of Methanocaldococcus jannaschii (strain ATCC 43067 / DSM 2661 / JAL-1 / JCM 10045 / NBRC 100440) (Methanococcus jannaschii).